The chain runs to 156 residues: Arginine repressor (156 aa).

This sequence belongs to the ArgR family.

It is found in the cytoplasm. The protein operates within amino-acid biosynthesis; L-arginine biosynthesis [regulation]. In terms of biological role, regulates arginine biosynthesis genes. In Citrobacter koseri (strain ATCC BAA-895 / CDC 4225-83 / SGSC4696), this protein is Arginine repressor.